Consider the following 713-residue polypeptide: Polyribonucleotide nucleotidyltransferase (713 aa).

D498 and D504 together coordinate Mg(2+). The 67-residue stretch at 565 to 631 (PRILSLKVPV…RIEDLTREAK (67 aa)) folds into the KH domain. The region spanning 633-701 (GEIYEGTVTR…ERGKIDLIRP (69 aa)) is the S1 motif domain.

It belongs to the polyribonucleotide nucleotidyltransferase family. Mg(2+) is required as a cofactor.

It is found in the cytoplasm. It carries out the reaction RNA(n+1) + phosphate = RNA(n) + a ribonucleoside 5'-diphosphate. In terms of biological role, involved in mRNA degradation. Catalyzes the phosphorolysis of single-stranded polyribonucleotides processively in the 3'- to 5'-direction. The chain is Polyribonucleotide nucleotidyltransferase from Thermus thermophilus.